A 225-amino-acid chain; its full sequence is Ribonuclease 3 (225 aa).

The RNase III domain occupies 5 to 127 (MNKLTSKLGY…IIGAIYLDSD (123 aa)). Glu-40 lines the Mg(2+) pocket. Asp-44 is a catalytic residue. Positions 113 and 116 each coordinate Mg(2+). Residue Glu-116 is part of the active site. The DRBM domain maps to 154-224 (DPKTRLQEFL…AETALEQLTN (71 aa)).

The protein belongs to the ribonuclease III family. Homodimer. Requires Mg(2+) as cofactor.

The protein resides in the cytoplasm. It catalyses the reaction Endonucleolytic cleavage to 5'-phosphomonoester.. In terms of biological role, digests double-stranded RNA. Involved in the processing of primary rRNA transcript to yield the immediate precursors to the large and small rRNAs (23S and 16S). Processes some mRNAs, and tRNAs when they are encoded in the rRNA operon. Processes pre-crRNA and tracrRNA of type II CRISPR loci if present in the organism. This chain is Ribonuclease 3, found in Vibrio cholerae serotype O1 (strain ATCC 39315 / El Tor Inaba N16961).